We begin with the raw amino-acid sequence, 734 residues long: Photosystem I P700 chlorophyll a apoprotein A2 (734 aa).

8 consecutive transmembrane segments (helical) span residues 46 to 69, 135 to 158, 175 to 199, 273 to 291, 330 to 353, 369 to 395, 417 to 439, and 517 to 535; these read IFAS…FHVA, LYSG…LHLQ, LNHH…HVAI, MAHH…GHMY, LHFQ…QHMY, AALY…IFFI, AIIS…LYVH, and FLVH…LILV. [4Fe-4S] cluster contacts are provided by C559 and C568. A run of 2 helical transmembrane segments spans residues 575-596 and 643-665; these read AFYL…YWHW and LSVW…MFLI. Positions 654, 662, and 670 each coordinate chlorophyll a. A phylloquinone-binding site is contributed by W671. Residues 707-727 traverse the membrane as a helical segment; that stretch reads LVGLAHFSVGYIFTYAAFLIA.

The protein belongs to the PsaA/PsaB family. As to quaternary structure, the PsaA/B heterodimer binds the P700 chlorophyll special pair and subsequent electron acceptors. PSI consists of a core antenna complex that captures photons, and an electron transfer chain that converts photonic excitation into a charge separation. The eukaryotic PSI reaction center is composed of at least 11 subunits. Requires P700 is a chlorophyll a/chlorophyll a' dimer, A0 is one or more chlorophyll a, A1 is one or both phylloquinones and FX is a shared 4Fe-4S iron-sulfur center. as cofactor.

The protein resides in the plastid. It is found in the chloroplast thylakoid membrane. It carries out the reaction reduced [plastocyanin] + hnu + oxidized [2Fe-2S]-[ferredoxin] = oxidized [plastocyanin] + reduced [2Fe-2S]-[ferredoxin]. Functionally, psaA and PsaB bind P700, the primary electron donor of photosystem I (PSI), as well as the electron acceptors A0, A1 and FX. PSI is a plastocyanin-ferredoxin oxidoreductase, converting photonic excitation into a charge separation, which transfers an electron from the donor P700 chlorophyll pair to the spectroscopically characterized acceptors A0, A1, FX, FA and FB in turn. Oxidized P700 is reduced on the lumenal side of the thylakoid membrane by plastocyanin. The polypeptide is Photosystem I P700 chlorophyll a apoprotein A2 (Antirrhinum majus (Garden snapdragon)).